A 450-amino-acid chain; its full sequence is Membrane-bound lytic murein transglycosylase F 2 (450 aa).

An N-terminal signal peptide occupies residues 1–20; that stretch reads MRTWIAILAVVLVLLLNACT. The non-LT domain stretch occupies residues 21-261; that stretch reads DGPEDGPRLE…AMENRYYTYV (241 aa). The segment at 262–450 is LT domain; that stretch reads GEFDFVDLRA…YRDVIRQAFE (189 aa). Residue Glu-308 is part of the active site.

The protein in the N-terminal section; belongs to the bacterial solute-binding protein 3 family. This sequence in the C-terminal section; belongs to the transglycosylase Slt family.

It is found in the cell outer membrane. It carries out the reaction Exolytic cleavage of the (1-&gt;4)-beta-glycosidic linkage between N-acetylmuramic acid (MurNAc) and N-acetylglucosamine (GlcNAc) residues in peptidoglycan, from either the reducing or the non-reducing ends of the peptidoglycan chains, with concomitant formation of a 1,6-anhydrobond in the MurNAc residue.. Its function is as follows. Murein-degrading enzyme that degrades murein glycan strands and insoluble, high-molecular weight murein sacculi, with the concomitant formation of a 1,6-anhydromuramoyl product. Lytic transglycosylases (LTs) play an integral role in the metabolism of the peptidoglycan (PG) sacculus. Their lytic action creates space within the PG sacculus to allow for its expansion as well as for the insertion of various structures such as secretion systems and flagella. In Alkalilimnicola ehrlichii (strain ATCC BAA-1101 / DSM 17681 / MLHE-1), this protein is Membrane-bound lytic murein transglycosylase F 2.